Here is a 251-residue protein sequence, read N- to C-terminus: MAHRLQIRLLTWDVKDTLLRLRHPLGEAYATKARAHGLEVEPSALEQGFRQAYRAQSHSFPNYGLSHGLTSRQWWLDVVLQTFHLAGVQDAQAVAPIAEQLYKDFSHPCTWQVLDGAEDTLRECRTRGLRLAVISNFDRRLEGILGGLGLREHFDFVLTSEAAGWPKPDPRIFQEALRLAHMEPVVAAHVGDNYLCDYQGPRAVGMHSFLVVGPQALDPVVRDSVPKEHILPSLAHLLPALDCLEGSTPGL.

An N6-acetyllysine; alternate modification is found at Lys15. N6-succinyllysine; alternate is present on Lys15.

Belongs to the HAD-like hydrolase superfamily.

The protein is Haloacid dehalogenase-like hydrolase domain-containing protein 3 (HDHD3) of Homo sapiens (Human).